The following is an 89-amino-acid chain: Arminin 7591 (89 aa).

The N-terminal stretch at 1–18 (MRSAFAVLFLALIAITYS) is a signal peptide. A propeptide spanning residues 19-58 (KNYEDVKEEIKNEVENEILKDLEEDVNEFDDNVQEEVNDA) is cleaved from the precursor. Position 86 is a leucine amide (Leu-86).

The protein belongs to the arminin family. As to expression, expressed in entodermal epithelium along the body column.

The protein localises to the secreted. Its subcellular location is the target cell membrane. In terms of biological role, antimicrobial peptide with a broad-spectrum antimicrobial activity. Keeps its antibacterial activity under a wide range of salt concentrations that mimic physiological conditions of human blood, which is surprising, since Hydra is an obligate freshwater animal with nearly no salt tolerance. Does not affect red blood cells. The chain is Arminin 7591 from Hydra vulgaris (Hydra).